The following is a 629-amino-acid chain: 1-deoxy-D-xylulose-5-phosphate synthase (629 aa).

Thiamine diphosphate contacts are provided by residues histidine 85 and 126 to 128; that span reads GHS. Aspartate 157 contacts Mg(2+). Residues 158 to 159, asparagine 186, tyrosine 293, and glutamate 373 contribute to the thiamine diphosphate site; that span reads GS. Asparagine 186 contacts Mg(2+).

Belongs to the transketolase family. DXPS subfamily. In terms of assembly, homodimer. Mg(2+) serves as cofactor. It depends on thiamine diphosphate as a cofactor.

It catalyses the reaction D-glyceraldehyde 3-phosphate + pyruvate + H(+) = 1-deoxy-D-xylulose 5-phosphate + CO2. It participates in metabolic intermediate biosynthesis; 1-deoxy-D-xylulose 5-phosphate biosynthesis; 1-deoxy-D-xylulose 5-phosphate from D-glyceraldehyde 3-phosphate and pyruvate: step 1/1. Catalyzes the acyloin condensation reaction between C atoms 2 and 3 of pyruvate and glyceraldehyde 3-phosphate to yield 1-deoxy-D-xylulose-5-phosphate (DXP). The protein is 1-deoxy-D-xylulose-5-phosphate synthase of Helicobacter hepaticus (strain ATCC 51449 / 3B1).